The primary structure comprises 482 residues: Alanine aminotransferase 2 (482 aa).

Position 299 is an N6-(pyridoxal phosphate)lysine (lysine 299).

Belongs to the class-I pyridoxal-phosphate-dependent aminotransferase family. Alanine aminotransferase subfamily. As to quaternary structure, homodimer. It depends on pyridoxal 5'-phosphate as a cofactor.

The catalysed reaction is L-alanine + 2-oxoglutarate = pyruvate + L-glutamate. It participates in photosynthesis; C4 acid pathway. The protein operates within amino-acid degradation; L-alanine degradation via transaminase pathway; pyruvate from L-alanine: step 1/1. Functionally, transfer of C3 units between the cytosol of mesophyll and bundle sheath cells to maintain a nitrogen-carbon balance in the C4-dicarboxylic pathway. The chain is Alanine aminotransferase 2 from Hordeum vulgare (Barley).